A 97-amino-acid chain; its full sequence is Co-chaperonin GroES (97 aa).

Belongs to the GroES chaperonin family. Heptamer of 7 subunits arranged in a ring. Interacts with the chaperonin GroEL.

It localises to the cytoplasm. Its function is as follows. Together with the chaperonin GroEL, plays an essential role in assisting protein folding. The GroEL-GroES system forms a nano-cage that allows encapsulation of the non-native substrate proteins and provides a physical environment optimized to promote and accelerate protein folding. GroES binds to the apical surface of the GroEL ring, thereby capping the opening of the GroEL channel. The protein is Co-chaperonin GroES of Yersinia enterocolitica.